The chain runs to 228 residues: L-ribulose-5-phosphate 4-epimerase UlaF (228 aa).

Substrate-binding positions include glycine 26–asparagine 27, serine 43–glycine 44, and serine 72–serine 73. Aspartate 74, histidine 93, and histidine 95 together coordinate Zn(2+). Aspartate 118 acts as the Proton donor/acceptor in catalysis. Histidine 167 serves as a coordination point for Zn(2+). The Proton donor/acceptor role is filled by tyrosine 225.

It belongs to the aldolase class II family. AraD/FucA subfamily. It depends on Zn(2+) as a cofactor.

The catalysed reaction is L-ribulose 5-phosphate = D-xylulose 5-phosphate. The protein operates within cofactor degradation; L-ascorbate degradation; D-xylulose 5-phosphate from L-ascorbate: step 4/4. In terms of biological role, catalyzes the isomerization of L-ribulose 5-phosphate to D-xylulose 5-phosphate. Is involved in the anaerobic L-ascorbate utilization. This chain is L-ribulose-5-phosphate 4-epimerase UlaF, found in Salmonella paratyphi B (strain ATCC BAA-1250 / SPB7).